Consider the following 442-residue polypeptide: Dihydrolipoyllysine-residue acetyltransferase component of pyruvate dehydrogenase complex (442 aa).

The Lipoyl-binding domain occupies Ala-2–Asp-77. Lys-43 is subject to N6-lipoyllysine. Over residues Leu-84–Thr-97 the composition is skewed to basic and acidic residues. The interval Leu-84 to Pro-136 is disordered. A Peripheral subunit-binding (PSBD) domain is found at Ile-141 to Val-178. The span at Ala-182–Gly-208 shows a compositional bias: low complexity. The interval Ala-182 to Glu-215 is disordered. The active site involves His-413.

Belongs to the 2-oxoacid dehydrogenase family. In terms of assembly, forms a 24-polypeptide structural core with octahedral symmetry. (R)-lipoate serves as cofactor.

It catalyses the reaction N(6)-[(R)-dihydrolipoyl]-L-lysyl-[protein] + acetyl-CoA = N(6)-[(R)-S(8)-acetyldihydrolipoyl]-L-lysyl-[protein] + CoA. Functionally, the pyruvate dehydrogenase complex catalyzes the overall conversion of pyruvate to acetyl-CoA and CO(2). It contains multiple copies of three enzymatic components: pyruvate dehydrogenase (E1), dihydrolipoamide acetyltransferase (E2) and lipoamide dehydrogenase (E3). Its function is as follows. The B.subtilis PDH complex also possesses branched-chain 2-oxoacid dehydrogenase (BCDH) activity. The protein is Dihydrolipoyllysine-residue acetyltransferase component of pyruvate dehydrogenase complex (pdhC) of Bacillus subtilis (strain 168).